A 99-amino-acid chain; its full sequence is Teretoxin Tsu6.4 (99 aa).

The first 21 residues, 1-21 (MRLLLILVLLTPVIVAFSVDE), serve as a signal peptide directing secretion. The propeptide occupies 22-53 (ELNNADGANAASFTADQEVRHKRNLFPAIARR).

Post-translationally, contains 3 disulfide bonds. Expressed by the venom duct.

The protein localises to the secreted. In Terebra subulata (Chocolate spotted auger), this protein is Teretoxin Tsu6.4.